Here is a 306-residue protein sequence, read N- to C-terminus: Elongation factor Ts (306 aa).

The tract at residues 80–83 (TDFV) is involved in Mg(2+) ion dislocation from EF-Tu.

This sequence belongs to the EF-Ts family.

It localises to the cytoplasm. In terms of biological role, associates with the EF-Tu.GDP complex and induces the exchange of GDP to GTP. It remains bound to the aminoacyl-tRNA.EF-Tu.GTP complex up to the GTP hydrolysis stage on the ribosome. This is Elongation factor Ts from Clostridium novyi (strain NT).